We begin with the raw amino-acid sequence, 384 residues long: Spermidine/putrescine import ATP-binding protein PotA (384 aa).

An ABC transporter domain is found at 6 to 238 (IAFQNVSKVF…PINHFVATFI (233 aa)). Position 40–47 (40–47 (GASGSGKS)) interacts with ATP.

The protein belongs to the ABC transporter superfamily. Spermidine/putrescine importer (TC 3.A.1.11.1) family. In terms of assembly, the complex is composed of two ATP-binding proteins (PotA), two transmembrane proteins (PotB and PotC) and a solute-binding protein (PotD).

The protein resides in the cell membrane. The catalysed reaction is ATP + H2O + polyamine-[polyamine-binding protein]Side 1 = ADP + phosphate + polyamineSide 2 + [polyamine-binding protein]Side 1.. Functionally, part of the ABC transporter complex PotABCD involved in spermidine/putrescine import. Responsible for energy coupling to the transport system. The polypeptide is Spermidine/putrescine import ATP-binding protein PotA (Streptococcus thermophilus (strain ATCC BAA-491 / LMD-9)).